Reading from the N-terminus, the 194-residue chain is Type II restriction enzyme OkrAI (194 aa).

3 residues coordinate Mg(2+): Glu-71, Asp-86, and Trp-100. The active-site Proton acceptor is the Glu-101.

Homodimer. Mg(2+) is required as a cofactor.

It carries out the reaction Endonucleolytic cleavage of DNA to give specific double-stranded fragments with terminal 5'-phosphates.. In terms of biological role, a P subtype restriction enzyme that recognizes the double-stranded sequence 5'-GGATCC-3' and cleaves after G-1. This chain is Type II restriction enzyme OkrAI, found in Oceanobacter kriegii (Oceanospirillum kriegii).